The following is a 243-amino-acid chain: MSRAPLPLAAHERLIFALDVPSHDEAIAWVDRLGDSVAFYKIGMELLASGEYFHVLDALAKRDKRVFVDLKFFDIPATVAGTIRRLAQWPVSYCTVHGWHAGMLQAAADANHGAMRLLAVTVLTSMGRPDLAAMGIDREPVDVVVERALAAEAAGIDGVIASGQEAGPIRRATGPAFSIVCPGIRPGGPVADDQQRIVGVAQAFTDGADAIVVGRPIRLAADPAAAAAAIQAEILAAVGQDRS.

Residues Asp19, Lys41, 69–78, Thr124, Arg185, Gln194, Gly214, and Arg215 contribute to the substrate site; that span reads DLKFFDIPAT. Residue Lys71 is the Proton donor of the active site.

It belongs to the OMP decarboxylase family. Type 1 subfamily. In terms of assembly, homodimer.

The enzyme catalyses orotidine 5'-phosphate + H(+) = UMP + CO2. The protein operates within pyrimidine metabolism; UMP biosynthesis via de novo pathway; UMP from orotate: step 2/2. Functionally, catalyzes the decarboxylation of orotidine 5'-monophosphate (OMP) to uridine 5'-monophosphate (UMP). This chain is Orotidine 5'-phosphate decarboxylase, found in Xanthomonas oryzae pv. oryzae (strain MAFF 311018).